Consider the following 412-residue polypeptide: NADH-quinone oxidoreductase subunit D (412 aa).

This sequence belongs to the complex I 49 kDa subunit family. NDH-1 is composed of 14 different subunits. Subunits NuoB, C, D, E, F, and G constitute the peripheral sector of the complex.

Its subcellular location is the cell inner membrane. The enzyme catalyses a quinone + NADH + 5 H(+)(in) = a quinol + NAD(+) + 4 H(+)(out). Its function is as follows. NDH-1 shuttles electrons from NADH, via FMN and iron-sulfur (Fe-S) centers, to quinones in the respiratory chain. The immediate electron acceptor for the enzyme in this species is believed to be a menaquinone. Couples the redox reaction to proton translocation (for every two electrons transferred, four hydrogen ions are translocated across the cytoplasmic membrane), and thus conserves the redox energy in a proton gradient. This Flavobacterium johnsoniae (strain ATCC 17061 / DSM 2064 / JCM 8514 / BCRC 14874 / CCUG 350202 / NBRC 14942 / NCIMB 11054 / UW101) (Cytophaga johnsonae) protein is NADH-quinone oxidoreductase subunit D.